The primary structure comprises 310 residues: N-acetyl-gamma-glutamyl-phosphate reductase (310 aa).

Cysteine 117 is an active-site residue.

This sequence belongs to the NAGSA dehydrogenase family. Type 2 subfamily.

The protein localises to the cytoplasm. The enzyme catalyses N-acetyl-L-glutamate 5-semialdehyde + phosphate + NADP(+) = N-acetyl-L-glutamyl 5-phosphate + NADPH + H(+). It participates in amino-acid biosynthesis; L-arginine biosynthesis; N(2)-acetyl-L-ornithine from L-glutamate: step 3/4. Functionally, catalyzes the NADPH-dependent reduction of N-acetyl-5-glutamyl phosphate to yield N-acetyl-L-glutamate 5-semialdehyde. This chain is N-acetyl-gamma-glutamyl-phosphate reductase, found in Brucella ovis (strain ATCC 25840 / 63/290 / NCTC 10512).